A 298-amino-acid chain; its full sequence is Syntaxin-4 (298 aa).

At 1 to 274 the chain is on the cytoplasmic side; it reads MRDRTHELRQ…NQKKARKKKV (274 aa). Ser-15, Ser-29, Ser-36, Ser-117, Ser-208, and Ser-248 each carry phosphoserine. Residues 38–163 adopt a coiled-coil conformation; sequence DDEFFQKVQT…ERIRRQLKIT (126 aa). The segment at 154–298 is interaction with CENPF; that stretch reads ERIRRQLKIT…VIIGITITVG (145 aa). One can recognise a t-SNARE coiled-coil homology domain in the interval 200-262; sequence LNEISARHSE…ERGQEHVKIA (63 aa). Residues 275 to 295 traverse the membrane as a helical; Anchor for type IV membrane protein segment; that stretch reads MIAICVSVTVLILAVIIGITI. Residues 296–298 are Extracellular-facing; it reads TVG.

This sequence belongs to the syntaxin family. Interacts with STXBP6. Component of the SNARE complex composed of STX4, SNAP23 and VAMP7 that interacts with SYT7 during lysosomal exocytosis. Found in a complex with VAMP8 and SNAP23. Detected in a complex with SNAP23 and STXBP4. Interacts with VAMP2. Interacts with SNAP23 and SNAPIN. Interacts with LLGL1. Interacts (via C-terminus) with CENPF. Interacts with DOC2B. Interacts with STXBP3; excludes interaction with DOC2B and SNAP25. Interacts with STXBP4; excludes interaction with VAMP2. Interacts with STXBP5L. In terms of tissue distribution, expressed in the outer and inner hair cells of the cochlea.

The protein resides in the cell membrane. Its subcellular location is the cell projection. It localises to the neuron projection. The protein localises to the stereocilium. Functionally, plasma membrane t-SNARE that mediates docking of transport vesicles. Necessary for the translocation of SLC2A4 from intracellular vesicles to the plasma membrane. In neurons, recruited at neurite tips to membrane domains rich in the phospholipid 1-oleoyl-2-palmitoyl-PC (OPPC) which promotes neurite tip surface expression of the dopamine transporter SLC6A3/DAT by facilitating fusion of SLC6A3-containing transport vesicles with the plasma membrane. Together with STXB3 and VAMP2, may also play a role in docking/fusion of intracellular GLUT4-containing vesicles with the cell surface in adipocytes and in docking of synaptic vesicles at presynaptic active zones. Required for normal hearing. The sequence is that of Syntaxin-4 (Stx4) from Mus musculus (Mouse).